A 1213-amino-acid chain; its full sequence is Chitin synthase 3 (1213 aa).

The interval 1 to 97 (MSNFRDSSSP…TPPHQEEEED (97 aa)) is disordered. Residues 1–168 (MSNFRDSSSP…KPKHDIYFWK (168 aa)) are Cytoplasmic-facing. The segment covering 32 to 44 (IRPERSRMDESHP) has biased composition (basic and acidic residues). The span at 75–87 (ELSTSRSHLSNYA) shows a compositional bias: polar residues. A helical transmembrane segment spans residues 169–189 (VYCYAITFWAPAPLLKLFGLP). Residues 190 to 200 (TKDRQFAWREK) are Extracellular-facing. The helical transmembrane segment at 201–221 (IGLISCILYVGAFVAYLTFGF) threads the bilayer. Residues 222–450 (TKTVCSSQVV…TDTIGCIASK (229 aa)) are Cytoplasmic-facing. The helical transmembrane segment at 451–471 (VVLYMSLVFILSVVVVKFIMA) threads the bilayer. At 472–1016 (CWFKWVTSRK…INSTVHNLFE (545 aa)) the chain is on the extracellular side. N-linked (GlcNAc...) asparagine glycosylation is found at N588 and N1008. A helical membrane pass occupies residues 1017 to 1037 (LVLVKDLCGTFCFSMQFVIFI). At 1038–1039 (EL) the chain is on the cytoplasmic side. The helical transmembrane segment at 1040–1060 (IGTLVLPAAITFTIYVIIVAI) threads the bilayer. The Extracellular segment spans residues 1061–1065 (VSKPT). A helical membrane pass occupies residues 1066–1086 (PVMSLVLLAVIFGLPGCLIVI). Residues 1087 to 1213 (TVSSLSYLVY…LSQGSSSGSS (127 aa)) are Cytoplasmic-facing. A disordered region spans residues 1161 to 1213 (ERRSTENRKQQQQQQLTNNSSNNLAVPGAAWDPSNTGGNLIDDLSQGSSSGSS).

The protein belongs to the chitin synthase family. Class IV subfamily.

It is found in the cell membrane. The enzyme catalyses [(1-&gt;4)-N-acetyl-beta-D-glucosaminyl](n) + UDP-N-acetyl-alpha-D-glucosamine = [(1-&gt;4)-N-acetyl-beta-D-glucosaminyl](n+1) + UDP + H(+). In terms of biological role, polymerizes chitin, a structural polymer of the cell wall and septum, by transferring the sugar moiety of UDP-GlcNAc to the non-reducing end of the growing chitin polymer. The polypeptide is Chitin synthase 3 (CHS3) (Candida albicans (Yeast)).